We begin with the raw amino-acid sequence, 337 residues long: Glycine N(alpha)-acyltransferase (337 aa).

Belongs to the acetyltransferase family.

It catalyses the reaction a (3R)-hydroxyacyl-[ACP] + glycine = a lyso-glycine lipid + holo-[ACP] + H(+). The catalysed reaction is (3R)-hydroxyhexadecanoyl-[ACP] + glycine = N-[(3R)-3-hydroxyhexadecanoyl]-glycine + holo-[ACP] + H(+). It functions in the pathway lipid metabolism. Functionally, is involved in the production of glycine lipids (GL), which are phosphorus-free membrane lipids important for fitness during growth of the human gut bacterium B.thetaiotaomicron in vivo and in vitro. Catalyzes the first step of GL biosynthesis, i.e. the N-acylation of glycine via addition of a 3-hydroxy fatty acyl group, to form a range of monoacylated glycine (also named lyso-glycine lipids or lyso-GL). Is important for the ability of B.thetaiotaomicron to adapt to stress and colonize the mammalian gut. Also seems to be required for the production of flavolipin, an acylated serine-glycine dipeptide. This chain is Glycine N(alpha)-acyltransferase, found in Bacteroides thetaiotaomicron (strain ATCC 29148 / DSM 2079 / JCM 5827 / CCUG 10774 / NCTC 10582 / VPI-5482 / E50).